The chain runs to 74 residues: uncharacterized protein (74 aa).

Residues 55–74 (DENSESESKDGASWFKVYRG) are disordered.

This is an uncharacterized protein from Listeria innocua serovar 6a (strain ATCC BAA-680 / CLIP 11262).